A 141-amino-acid chain; its full sequence is Large ribosomal subunit protein uL16 (141 aa).

Belongs to the universal ribosomal protein uL16 family. In terms of assembly, part of the 50S ribosomal subunit.

In terms of biological role, binds 23S rRNA and is also seen to make contacts with the A and possibly P site tRNAs. This is Large ribosomal subunit protein uL16 from Nostoc punctiforme (strain ATCC 29133 / PCC 73102).